The following is a 153-amino-acid chain: Prostaglandin E synthase (153 aa).

Residues 1–13 (MPPSGLELMNGQV) are Lumenal-facing. Residues 14–42 (LPAFLLCSALLVIKMYVVAVITGQVRLRK) form a helical membrane-spanning segment. Residue R39 participates in glutathione binding. The Cytoplasmic portion of the chain corresponds to 43-61 (KAFANPEDAQRHGGLQYCR). A helical membrane pass occupies residues 62-91 (NDPDVERCLRAHRNDMETIYPFLFLGFVYS). Residue 74–78 (RNDME) participates in glutathione binding. Over 92–96 (FLGPN) the chain is Lumenal. A helical membrane pass occupies residues 97–120 (PFVARMHFLVFFLGRMVHTVAYLG). Glutathione contacts are provided by H114 and Y118. Residues 121–124 (KLRA) lie on the Cytoplasmic side of the membrane. Residues 125 to 153 (PTRSLAYTLAQLPCASMALQIVWEAARHL) form a helical membrane-spanning segment. 127 to 131 (RSLAY) is a glutathione binding site.

This sequence belongs to the MAPEG family. In terms of assembly, homotrimer. It depends on glutathione as a cofactor.

The protein resides in the membrane. It is found in the cytoplasm. It localises to the perinuclear region. It carries out the reaction prostaglandin H2 = prostaglandin E2. It catalyses the reaction 2-glyceryl-prostaglandin H2 = 2-glyceryl-prostaglandin E2. The catalysed reaction is prostaglandin G2 = (15S)-15-hydroperoxy-prostaglandin E2. The enzyme catalyses 1-chloro-2,4-dinitrobenzene + glutathione = 2,4-dinitrophenyl-S-glutathione + chloride + H(+). It carries out the reaction (5S)-hydroperoxy-(6E,8Z,11Z,14Z)-eicosatetraenoate + 2 glutathione = (5S)-hydroxy-(6E,8Z,11Z,14Z)-eicosatetraenoate + glutathione disulfide + H2O. Its pathway is lipid metabolism; prostaglandin biosynthesis. In terms of biological role, terminal enzyme of the cyclooxygenase (COX)-2-mediated prostaglandin E2 (PGE2) biosynthetic pathway. Catalyzes the glutathione-dependent oxidoreduction of prostaglandin endoperoxide H2 (PGH2) to prostaglandin E2 (PGE2) in response to inflammatory stimuli. Plays a key role in inflammation response, fever and pain. Also catalyzes the oxidoreduction of endocannabinoids into prostaglandin glycerol esters and PGG2 into 15-hydroperoxy-PGE2. In addition, displays low glutathione transferase and glutathione-dependent peroxidase activities, toward 1-chloro-2,4-dinitrobenzene and 5-hydroperoxyicosatetraenoic acid (5-HPETE), respectively. This is Prostaglandin E synthase (PTGES) from Bos taurus (Bovine).